Here is a 199-residue protein sequence, read N- to C-terminus: Adenylate kinase (199 aa).

Residue 10–15 (GAGKGT) participates in ATP binding. The interval 30-59 (STGDMLRAAVAARTPVGLQAKSIMESGGLV) is NMP. AMP-binding positions include T31, R36, 57–59 (GLV), 85–88 (GFPR), and Q92. The interval 126–142 (KRAAETLARGEAVRKDD) is LID. ATP is bound at residue R127. R139 and R150 together coordinate AMP. Position 178 (A178) interacts with ATP.

This sequence belongs to the adenylate kinase family. As to quaternary structure, monomer.

Its subcellular location is the cytoplasm. It carries out the reaction AMP + ATP = 2 ADP. The protein operates within purine metabolism; AMP biosynthesis via salvage pathway; AMP from ADP: step 1/1. Catalyzes the reversible transfer of the terminal phosphate group between ATP and AMP. Plays an important role in cellular energy homeostasis and in adenine nucleotide metabolism. In Methylobacterium nodulans (strain LMG 21967 / CNCM I-2342 / ORS 2060), this protein is Adenylate kinase.